The sequence spans 97 residues: Secreted RxLR effector protein BLR05 (97 aa).

The first 21 residues, Met-1 to Ala-21, serve as a signal peptide directing secretion. The RxLR-dEER signature appears at Arg-32 to Asp-60. The chain crosses the membrane as a helical span at residues Ile-69–Ala-89.

It belongs to the RxLR effector family. As to quaternary structure, interacts with host transcription factor NAC069.

Its subcellular location is the secreted. The protein resides in the host endoplasmic reticulum membrane. Its function is as follows. Secreted effector that inhibits stress-induced relocalization of the transcription factor NAC069 to the nucleus, thus affecting its broad role in abiotic and biotic stress responses. The sequence is that of Secreted RxLR effector protein BLR05 from Bremia lactucae (Lettuce downy mildew).